A 487-amino-acid polypeptide reads, in one-letter code: Diacylglycerol kinase 4 (487 aa).

Residues 86–242 (TPEVPLMVFV…LDSWNILITM (157 aa)) form the DAGKc domain.

This sequence belongs to the eukaryotic diacylglycerol kinase family. Monomer. In terms of tissue distribution, highly expressed in pollen grains. Expressed in roots, hypocotyls, leaf vasculature, developing anthers and stigmas, and receptacles of siliques.

The protein resides in the endoplasmic reticulum. The protein localises to the cytoplasm. Its subcellular location is the cytosol. The catalysed reaction is a 1,2-diacyl-sn-glycerol + ATP = a 1,2-diacyl-sn-glycero-3-phosphate + ADP + H(+). Functionally, phosphorylates the second messenger diacylglycerol (DAG) to generate phosphatidic acid (PA), another important signaling molecule. PA is required for plant development and responses to abiotic stress and pathogen attack. May be involved in the accumulation of PA during cold stress. Involved in the regulation of PA and phosphatidylcholine biosynthesis in growing pollen tubes. Required for nitric oxide-dependent pollen tube growth and re-orientation responses. Functions together with DGK2 in male gametophyte development and biosynthesis of phosphatidylglycerol and phosphatidylinositol in the endoplasmic reticulum (ER). Involved in PA production for pollen grain growth, as well as leaf and root growth. Possesses guanylyl cyclase activity in vitro. The polypeptide is Diacylglycerol kinase 4 (Arabidopsis thaliana (Mouse-ear cress)).